A 471-amino-acid chain; its full sequence is uncharacterized protein (471 aa).

4 helical membrane passes run 10 to 30 (ALWL…LFVI), 46 to 66 (IDDR…WFAI), 87 to 107 (TLII…LYFS), and 280 to 300 (IVVG…LYFA).

It belongs to the bacterial sugar transferase family.

It localises to the cell membrane. The protein operates within glycan metabolism; exopolysaccharide biosynthesis. In terms of biological role, may function as a sugar transferase. This is an uncharacterized protein from Haemophilus influenzae (strain ATCC 51907 / DSM 11121 / KW20 / Rd).